A 200-amino-acid chain; its full sequence is Small ribosomal subunit protein uS4 (200 aa).

The interval 1 to 43 is disordered; that stretch reads MARYTGPRGRRDRRAGVMLSSMRKNPLEKKPYPPGEHGRDRQR. A compositionally biased stretch (basic and acidic residues) spans 25 to 43; sequence NPLEKKPYPPGEHGRDRQR. Residues 92–158 form the S4 RNA-binding domain; the sequence is LRMDNVVYRM…QPIQEAVEQV (67 aa).

This sequence belongs to the universal ribosomal protein uS4 family. In terms of assembly, part of the 30S ribosomal subunit. Contacts protein S5. The interaction surface between S4 and S5 is involved in control of translational fidelity.

Functionally, one of the primary rRNA binding proteins, it binds directly to 16S rRNA where it nucleates assembly of the body of the 30S subunit. Its function is as follows. With S5 and S12 plays an important role in translational accuracy. This is Small ribosomal subunit protein uS4 from Rubrobacter xylanophilus (strain DSM 9941 / JCM 11954 / NBRC 16129 / PRD-1).